The following is a 394-amino-acid chain: 1-deoxy-D-xylulose 5-phosphate reductoisomerase (394 aa).

NADPH-binding residues include T28, G29, S30, I31, N57, and N133. K134 is a binding site for 1-deoxy-D-xylulose 5-phosphate. E135 is an NADPH binding site. A Mn(2+)-binding site is contributed by D157. 1-deoxy-D-xylulose 5-phosphate-binding residues include S158, E159, S183, and H206. Position 159 (E159) interacts with Mn(2+). G212 lines the NADPH pocket. Residues S219, N224, K225, and E228 each coordinate 1-deoxy-D-xylulose 5-phosphate. Residue E228 participates in Mn(2+) binding.

It belongs to the DXR family. Mg(2+) serves as cofactor. Requires Mn(2+) as cofactor.

The enzyme catalyses 2-C-methyl-D-erythritol 4-phosphate + NADP(+) = 1-deoxy-D-xylulose 5-phosphate + NADPH + H(+). The protein operates within isoprenoid biosynthesis; isopentenyl diphosphate biosynthesis via DXP pathway; isopentenyl diphosphate from 1-deoxy-D-xylulose 5-phosphate: step 1/6. In terms of biological role, catalyzes the NADPH-dependent rearrangement and reduction of 1-deoxy-D-xylulose-5-phosphate (DXP) to 2-C-methyl-D-erythritol 4-phosphate (MEP). This is 1-deoxy-D-xylulose 5-phosphate reductoisomerase from Nocardia farcinica (strain IFM 10152).